The following is an 84-amino-acid chain: Polcalcin Nic t 1 (84 aa).

EF-hand domains follow at residues 6–40 and 41–76; these read QDIA…MLGS and VTSE…NRGL. Residues aspartate 19, asparagine 21, aspartate 23, lysine 25, glutamate 30, aspartate 54, aspartate 56, aspartate 58, and glutamate 65 each coordinate Ca(2+).

The polypeptide is Polcalcin Nic t 1 (Nict1) (Nicotiana tabacum (Common tobacco)).